The chain runs to 283 residues: Probable replication-associated protein repA1 (283 aa).

This sequence belongs to the IncFII RepA family.

This protein is essential for plasmid replication; it is involved in copy control functions. This chain is Probable replication-associated protein repA1 (repA1), found in Buchnera aphidicola subsp. Schizaphis graminum (strain Sg).